The primary structure comprises 115 residues: Holo-[acyl-carrier-protein] synthase (115 aa).

2 residues coordinate Mg(2+): aspartate 8 and glutamate 50.

Belongs to the P-Pant transferase superfamily. AcpS family. It depends on Mg(2+) as a cofactor.

It localises to the cytoplasm. The enzyme catalyses apo-[ACP] + CoA = holo-[ACP] + adenosine 3',5'-bisphosphate + H(+). Functionally, transfers the 4'-phosphopantetheine moiety from coenzyme A to a Ser of acyl-carrier-protein. The protein is Holo-[acyl-carrier-protein] synthase of Renibacterium salmoninarum (strain ATCC 33209 / DSM 20767 / JCM 11484 / NBRC 15589 / NCIMB 2235).